Reading from the N-terminus, the 413-residue chain is Putative competence-damage inducible protein (413 aa).

The protein belongs to the CinA family.

The sequence is that of Putative competence-damage inducible protein from Pediococcus pentosaceus (strain ATCC 25745 / CCUG 21536 / LMG 10740 / 183-1w).